We begin with the raw amino-acid sequence, 340 residues long: 2-deoxy-scyllo-inosamine dehydrogenase (340 aa).

The Zn(2+) site is built by C37, H59, C89, C92, C95, C103, and E144.

Belongs to the zinc-containing alcohol dehydrogenase family. DOIA dehydrogenase subfamily. Requires Zn(2+) as cofactor.

It catalyses the reaction 2-deoxy-scyllo-inosamine + NADP(+) = 3-amino-2,3-dideoxy-scyllo-inosose + NADPH + H(+). The catalysed reaction is 2-deoxy-scyllo-inosamine + NAD(+) = 3-amino-2,3-dideoxy-scyllo-inosose + NADH + H(+). It participates in metabolic intermediate biosynthesis; 2-deoxystreptamine biosynthesis; 2-deoxystreptamine from D-glucose 6-phosphate: step 3/4. The protein operates within antibiotic biosynthesis; neomycin biosynthesis. Catalyzes the oxidation of 2-deoxy-scyllo-inosamine (DOIA) with NAD(+) or NADP(+), forming 3-amino-2,3-dideoxy-scyllo-inosose (amino-DOI). The polypeptide is 2-deoxy-scyllo-inosamine dehydrogenase (neoA) (Streptomyces fradiae (Streptomyces roseoflavus)).